We begin with the raw amino-acid sequence, 181 residues long: UPF0302 protein LMHCC_0635 (181 aa).

This sequence belongs to the UPF0302 family.

This is UPF0302 protein LMHCC_0635 from Listeria monocytogenes serotype 4a (strain HCC23).